The following is a 323-amino-acid chain: Putative HTH-type transcriptional regulatory protein Hlac_0273 (323 aa).

The HTH cro/C1-type domain maps to 132–189; sequence LADEREERGWSLGRLATELGVSRRTVSKYEDGMNASIEVAIQLEDLFNEPFSSPVDVL. A DNA-binding region (H-T-H motif) is located at residues 143–162; sequence LGRLATELGVSRRTVSKYED. Residues 188 to 211 are disordered; it reads VLDGAGEVRDADPTPSAPETDPDD.

This chain is Putative HTH-type transcriptional regulatory protein Hlac_0273, found in Halorubrum lacusprofundi (strain ATCC 49239 / DSM 5036 / JCM 8891 / ACAM 34).